A 762-amino-acid chain; its full sequence is FAST kinase domain-containing protein 5, mitochondrial (762 aa).

The residue at position 95 (Ser-95) is a Phosphoserine. N6-acetyllysine is present on Lys-506. The RAP domain occupies 695 to 755; it reads LAIQFTNKNQ…RLEKLAYLHE (61 aa).

This sequence belongs to the FAST kinase family. In terms of assembly, found in a complex with GRSF1, DDX28, DHX30 and FASTKD2. Associates with the 12S mitochondrial rRNA (12S mt-rRNA). As to expression, expression detected in spleen, testis, colon, heart, smooth muscle, kidney, brain, lung, liver, brown and white adipose tissue.

The protein localises to the mitochondrion matrix. Its subcellular location is the mitochondrion nucleoid. In terms of biological role, plays an important role in the processing of non-canonical mitochondrial mRNA precursors. In Mus musculus (Mouse), this protein is FAST kinase domain-containing protein 5, mitochondrial (Fastkd5).